Here is a 93-residue protein sequence, read N- to C-terminus: Protamine-3 (93 aa).

Residues 1–93 (MGSRCAKLGT…QSPEPKQTRS (93 aa)) are disordered. Residues 37 to 57 (EGEEEEEGEEEEEEEGEEEEL) are compositionally biased toward acidic residues. Positions 81–93 (EVQQSPEPKQTRS) are enriched in polar residues. Phosphoserine is present on Ser85.

This sequence belongs to the protamine P3 family.

The protein resides in the nucleus. Its subcellular location is the chromosome. In terms of biological role, protamines substitute for histones in the chromatin of sperm during the haploid phase of spermatogenesis. They compact sperm DNA into a highly condensed, stable and inactive complex. This chain is Protamine-3 (PRM3), found in Bos taurus (Bovine).